A 602-amino-acid chain; its full sequence is Threonine--tRNA ligase (602 aa).

The tract at residues 208 to 499 (DHRKLGTELK…LTEHCAGEFP (292 aa)) is catalytic. Positions 300, 351, and 476 each coordinate Zn(2+).

The protein belongs to the class-II aminoacyl-tRNA synthetase family. Homodimer. Zn(2+) is required as a cofactor.

The protein localises to the cytoplasm. The catalysed reaction is tRNA(Thr) + L-threonine + ATP = L-threonyl-tRNA(Thr) + AMP + diphosphate + H(+). In terms of biological role, catalyzes the attachment of threonine to tRNA(Thr) in a two-step reaction: L-threonine is first activated by ATP to form Thr-AMP and then transferred to the acceptor end of tRNA(Thr). Also edits incorrectly charged L-seryl-tRNA(Thr). The protein is Threonine--tRNA ligase of Campylobacter jejuni (strain RM1221).